We begin with the raw amino-acid sequence, 273 residues long: Putative pyruvate, phosphate dikinase regulatory protein (273 aa).

An ADP-binding site is contributed by 153 to 160 (GISRTSKT).

It belongs to the pyruvate, phosphate/water dikinase regulatory protein family. PDRP subfamily.

It carries out the reaction N(tele)-phospho-L-histidyl/L-threonyl-[pyruvate, phosphate dikinase] + ADP = N(tele)-phospho-L-histidyl/O-phospho-L-threonyl-[pyruvate, phosphate dikinase] + AMP + H(+). It catalyses the reaction N(tele)-phospho-L-histidyl/O-phospho-L-threonyl-[pyruvate, phosphate dikinase] + phosphate + H(+) = N(tele)-phospho-L-histidyl/L-threonyl-[pyruvate, phosphate dikinase] + diphosphate. Its function is as follows. Bifunctional serine/threonine kinase and phosphorylase involved in the regulation of the pyruvate, phosphate dikinase (PPDK) by catalyzing its phosphorylation/dephosphorylation. The polypeptide is Putative pyruvate, phosphate dikinase regulatory protein (Rhizobium leguminosarum bv. trifolii (strain WSM2304)).